A 120-amino-acid polypeptide reads, in one-letter code: Large ribosomal subunit protein uL18 (120 aa).

The protein belongs to the universal ribosomal protein uL18 family. Part of the 50S ribosomal subunit; part of the 5S rRNA/L5/L18/L25 subcomplex. Contacts the 5S and 23S rRNAs.

Functionally, this is one of the proteins that bind and probably mediate the attachment of the 5S RNA into the large ribosomal subunit, where it forms part of the central protuberance. This is Large ribosomal subunit protein uL18 from Janthinobacterium sp. (strain Marseille) (Minibacterium massiliensis).